Consider the following 537-residue polypeptide: Cytochrome c oxidase subunit 1 (537 aa).

Residues 22-42 (ILYLLFGLVSGIIGSVFSFII) form a helical membrane-spanning segment. 3 residues coordinate Ca(2+): Glu45, Ala48, and Gly50. His68 lines the Fe(II)-heme a pocket. 8 consecutive transmembrane segments (helical) span residues 70 to 90 (ILMI…NYLV), 104 to 124 (VNNF…ISAL), 152 to 172 (LAIL…VNLI), 190 to 210 (LFAW…PVLA), 241 to 261 (LFWF…FGVV), 279 to 299 (MLWA…HHLF), 318 to 338 (IAIP…GGAI), and 345 to 365 (MLYA…GVIL). His247 serves as a coordination point for Cu cation. A cross-link (1'-histidyl-3'-tyrosine (His-Tyr)) is located at residues 247 to 251 (HPEVY). O2 is bound at residue Tyr251. Residues His296 and His297 each contribute to the Cu cation site. 2 residues coordinate Mg(2+): His375 and Asp376. A run of 2 helical transmembrane segments spans residues 379–399 (FVVA…LCGA) and 418–438 (IQFW…HFLG). Position 383 (His383) interacts with heme a3. His385 serves as a coordination point for Fe(II)-heme a. Residue Pro447 participates in Ca(2+) binding. The chain crosses the membrane as a helical span at residues 458–478 (FVSSIGSVISILSLFLFMYVM).

It belongs to the heme-copper respiratory oxidase family. Component of the cytochrome c oxidase (complex IV, CIV), a multisubunit enzyme composed of a catalytic core of 3 subunits and several supernumerary subunits. The complex exists as a monomer or a dimer and forms supercomplexes (SCs) in the inner mitochondrial membrane with ubiquinol-cytochrome c oxidoreductase (cytochrome b-c1 complex, complex III, CIII). The cofactor is heme. It depends on Cu cation as a cofactor.

It localises to the mitochondrion inner membrane. The catalysed reaction is 4 Fe(II)-[cytochrome c] + O2 + 8 H(+)(in) = 4 Fe(III)-[cytochrome c] + 2 H2O + 4 H(+)(out). The protein operates within energy metabolism; oxidative phosphorylation. Component of the cytochrome c oxidase, the last enzyme in the mitochondrial electron transport chain which drives oxidative phosphorylation. The respiratory chain contains 3 multisubunit complexes succinate dehydrogenase (complex II, CII), ubiquinol-cytochrome c oxidoreductase (cytochrome b-c1 complex, complex III, CIII) and cytochrome c oxidase (complex IV, CIV), that cooperate to transfer electrons derived from NADH and succinate to molecular oxygen, creating an electrochemical gradient over the inner membrane that drives transmembrane transport and the ATP synthase. Cytochrome c oxidase is the component of the respiratory chain that catalyzes the reduction of oxygen to water. Electrons originating from reduced cytochrome c in the intermembrane space (IMS) are transferred via the dinuclear copper A center (CU(A)) of subunit 2 and heme A of subunit 1 to the active site in subunit 1, a binuclear center (BNC) formed by heme A3 and copper B (CU(B)). The BNC reduces molecular oxygen to 2 water molecules using 4 electrons from cytochrome c in the IMS and 4 protons from the mitochondrial matrix. This Schizosaccharomyces pombe (strain 972 / ATCC 24843) (Fission yeast) protein is Cytochrome c oxidase subunit 1 (cox1).